We begin with the raw amino-acid sequence, 131 residues long: Two-component response regulator ORR3 (131 aa).

Positions 12–129 (HVLAVDDSIV…DVSRLCNRVI (118 aa)) constitute a Response regulatory domain. 4-aspartylphosphate is present on D62.

Belongs to the ARR family. Type-A subfamily. Two-component system major event consists of a His-to-Asp phosphorelay between a sensor histidine kinase (HK) and a response regulator (RR). In plants, the His-to-Asp phosphorelay involves an additional intermediate named Histidine-containing phosphotransfer protein (HPt). This multistep phosphorelay consists of a His-Asp-His-Asp sequential transfer of a phosphate group between first a His and an Asp of the HK protein, followed by the transfer to a conserved His of the HPt protein and finally the transfer to an Asp in the receiver domain of the RR protein. As to expression, expressed in roots, mature leaves and flowers, and at low levels in shoots.

Its function is as follows. Functions as a response regulator involved in His-to-Asp phosphorelay signal transduction system. Phosphorylation of the Asp residue in the receiver domain activates the ability of the protein to promote the transcription of target genes. Type-A response regulators seem to act as negative regulators of the cytokinin signaling. This Oryza sativa subsp. indica (Rice) protein is Two-component response regulator ORR3.